A 202-amino-acid polypeptide reads, in one-letter code: Small ribosomal subunit protein uS4 (202 aa).

The region spanning 94–157 (SRLDSLVYRA…LEIPLIKNTL (64 aa)) is the S4 RNA-binding domain.

It belongs to the universal ribosomal protein uS4 family. As to quaternary structure, part of the 30S ribosomal subunit. Contacts protein S5. The interaction surface between S4 and S5 is involved in control of translational fidelity.

Functionally, one of the primary rRNA binding proteins, it binds directly to 16S rRNA where it nucleates assembly of the body of the 30S subunit. In terms of biological role, with S5 and S12 plays an important role in translational accuracy. In Ureaplasma parvum serovar 3 (strain ATCC 27815 / 27 / NCTC 11736), this protein is Small ribosomal subunit protein uS4.